The chain runs to 501 residues: Zinc finger protein 704 (501 aa).

The segment covering 80-96 (SLKSTCNGGQRDGLTQG) has biased composition (polar residues). Disordered regions lie at residues 80–138 (SLKS…HTRS), 183–203 (PLVR…WKDG), and 216–267 (WSWS…LFDE). Basic and acidic residues predominate over residues 115 to 137 (EEPRVLEHKRTGRALETEKDHTR). Residues 281-306 (FKCLWKNCGKVLSTAAGIQRHIRTVH) form a C2H2-type zinc finger. Disordered regions lie at residues 340-380 (SLSP…SRSA), 398-419 (PVTI…FSIS), 427-446 (FTGT…GEQH), and 453-472 (LSSP…GEGK). Low complexity predominate over residues 368 to 380 (SESSSSTPLSRSA). Positions 472–476 (KKCRK) match the CR1 motif. A CR2 motif is present at residues 490–494 (CRWKK).

The protein localises to the nucleus. Its function is as follows. Transcription factor. This is Zinc finger protein 704 (znf704) from Danio rerio (Zebrafish).